The primary structure comprises 269 residues: Cytochrome c oxidase subunit 3 (269 aa).

The next 7 membrane-spanning stretches (helical) occupy residues P19–L39, H44–F64, I87–F107, L135–A155, G170–W190, F205–A225, and I247–W267.

The protein belongs to the cytochrome c oxidase subunit 3 family. Component of the cytochrome c oxidase (complex IV, CIV), a multisubunit enzyme composed of a catalytic core of 3 subunits and several supernumerary subunits. The complex exists as a monomer or a dimer and forms supercomplexes (SCs) in the inner mitochondrial membrane with ubiquinol-cytochrome c oxidoreductase (cytochrome b-c1 complex, complex III, CIII).

It is found in the mitochondrion inner membrane. The catalysed reaction is 4 Fe(II)-[cytochrome c] + O2 + 8 H(+)(in) = 4 Fe(III)-[cytochrome c] + 2 H2O + 4 H(+)(out). Functionally, component of the cytochrome c oxidase, the last enzyme in the mitochondrial electron transport chain which drives oxidative phosphorylation. The respiratory chain contains 3 multisubunit complexes succinate dehydrogenase (complex II, CII), ubiquinol-cytochrome c oxidoreductase (cytochrome b-c1 complex, complex III, CIII) and cytochrome c oxidase (complex IV, CIV), that cooperate to transfer electrons derived from NADH and succinate to molecular oxygen, creating an electrochemical gradient over the inner membrane that drives transmembrane transport and the ATP synthase. Cytochrome c oxidase is the component of the respiratory chain that catalyzes the reduction of oxygen to water. Electrons originating from reduced cytochrome c in the intermembrane space (IMS) are transferred via the dinuclear copper A center (CU(A)) of subunit 2 and heme A of subunit 1 to the active site in subunit 1, a binuclear center (BNC) formed by heme A3 and copper B (CU(B)). The BNC reduces molecular oxygen to 2 water molecules using 4 electrons from cytochrome c in the IMS and 4 protons from the mitochondrial matrix. This is Cytochrome c oxidase subunit 3 (cox3) from Schizosaccharomyces pombe (strain 972 / ATCC 24843) (Fission yeast).